Here is a 219-residue protein sequence, read N- to C-terminus: Izumo sperm-egg fusion protein 4 (219 aa).

Positions 1-15 (MALLLCLVGVTAALA) are cleaved as a signal peptide. N-linked (GlcNAc...) asparagine glycosylation occurs at Asn-206.

Belongs to the Izumo family.

It is found in the secreted. The protein is Izumo sperm-egg fusion protein 4 (IZUMO4) of Macaca fascicularis (Crab-eating macaque).